A 373-amino-acid chain; its full sequence is Dual-specificity RNA methyltransferase RlmN (373 aa).

Glu94 acts as the Proton acceptor in catalysis. A Radical SAM core domain is found at 100 to 339 (EDDRATLCVS…VIVRKTRGDD (240 aa)). Cys107 and Cys344 are joined by a disulfide. [4Fe-4S] cluster contacts are provided by Cys114, Cys118, and Cys121. S-adenosyl-L-methionine-binding positions include 168-169 (GE), Ser200, 222-224 (SIH), and Asn301. Cys344 functions as the S-methylcysteine intermediate in the catalytic mechanism.

Belongs to the radical SAM superfamily. RlmN family. [4Fe-4S] cluster is required as a cofactor.

It localises to the cytoplasm. The catalysed reaction is adenosine(2503) in 23S rRNA + 2 reduced [2Fe-2S]-[ferredoxin] + 2 S-adenosyl-L-methionine = 2-methyladenosine(2503) in 23S rRNA + 5'-deoxyadenosine + L-methionine + 2 oxidized [2Fe-2S]-[ferredoxin] + S-adenosyl-L-homocysteine. It catalyses the reaction adenosine(37) in tRNA + 2 reduced [2Fe-2S]-[ferredoxin] + 2 S-adenosyl-L-methionine = 2-methyladenosine(37) in tRNA + 5'-deoxyadenosine + L-methionine + 2 oxidized [2Fe-2S]-[ferredoxin] + S-adenosyl-L-homocysteine. In terms of biological role, specifically methylates position 2 of adenine 2503 in 23S rRNA and position 2 of adenine 37 in tRNAs. m2A2503 modification seems to play a crucial role in the proofreading step occurring at the peptidyl transferase center and thus would serve to optimize ribosomal fidelity. The protein is Dual-specificity RNA methyltransferase RlmN of Shewanella putrefaciens (strain CN-32 / ATCC BAA-453).